A 467-amino-acid chain; its full sequence is Asparagine--tRNA ligase (467 aa).

Belongs to the class-II aminoacyl-tRNA synthetase family. Homodimer.

The protein resides in the cytoplasm. It catalyses the reaction tRNA(Asn) + L-asparagine + ATP = L-asparaginyl-tRNA(Asn) + AMP + diphosphate + H(+). This Actinobacillus pleuropneumoniae serotype 3 (strain JL03) protein is Asparagine--tRNA ligase.